Consider the following 225-residue polypeptide: PKHD-type hydroxylase YbiX (225 aa).

A Fe2OG dioxygenase domain is found at 78–177; that stretch reads TLSTPLFNRY…RVASFMWIQS (100 aa). Fe cation is bound by residues H96, D98, and H158. R168 lines the 2-oxoglutarate pocket.

It depends on Fe(2+) as a cofactor. L-ascorbate is required as a cofactor.

The protein is PKHD-type hydroxylase YbiX of Shigella dysenteriae serotype 1 (strain Sd197).